Here is a 367-residue protein sequence, read N- to C-terminus: Porin Omp2a (367 aa).

Residues 1-22 (MNIKSLLLGSAAALVAASGAQA) form the signal peptide.

This sequence belongs to the alphaproteobacteria porin family. In terms of assembly, monomer.

The protein localises to the cell outer membrane. Forms passive diffusion pores that allow small molecular weight hydrophilic materials across the outer membrane. The chain is Porin Omp2a (omp2a) from Brucella melitensis biotype 1 (strain ATCC 23456 / CCUG 17765 / NCTC 10094 / 16M).